The following is a 166-amino-acid chain: HTH-type transcriptional regulator PrsX (166 aa).

Residues 25 to 159 (EHLLMQLCIR…FEVINKKLLA (135 aa)) enclose the HTH marR-type domain.

It is found in the cytoplasm. The chain is HTH-type transcriptional regulator PrsX (prsX) from Escherichia coli O6:H1 (strain CFT073 / ATCC 700928 / UPEC).